A 480-amino-acid polypeptide reads, in one-letter code: tRNA-2-methylthio-N(6)-dimethylallyladenosine synthase (480 aa).

In terms of domain architecture, MTTase N-terminal spans Asn-2 to Ala-118. 3 residues coordinate [4Fe-4S] cluster: Cys-11, Cys-47, and Cys-81. Residues Asp-145–Ala-169 are disordered. Over residues Pro-149–Ser-159 the composition is skewed to low complexity. One can recognise a Radical SAM core domain in the interval Pro-171–Arg-405. [4Fe-4S] cluster-binding residues include Cys-185, Cys-189, and Cys-192. In terms of domain architecture, TRAM spans Ala-408 to Leu-470.

It belongs to the methylthiotransferase family. MiaB subfamily. Monomer. Requires [4Fe-4S] cluster as cofactor.

The protein localises to the cytoplasm. The enzyme catalyses N(6)-dimethylallyladenosine(37) in tRNA + (sulfur carrier)-SH + AH2 + 2 S-adenosyl-L-methionine = 2-methylsulfanyl-N(6)-dimethylallyladenosine(37) in tRNA + (sulfur carrier)-H + 5'-deoxyadenosine + L-methionine + A + S-adenosyl-L-homocysteine + 2 H(+). Its function is as follows. Catalyzes the methylthiolation of N6-(dimethylallyl)adenosine (i(6)A), leading to the formation of 2-methylthio-N6-(dimethylallyl)adenosine (ms(2)i(6)A) at position 37 in tRNAs that read codons beginning with uridine. The protein is tRNA-2-methylthio-N(6)-dimethylallyladenosine synthase of Opitutus terrae (strain DSM 11246 / JCM 15787 / PB90-1).